A 545-amino-acid polypeptide reads, in one-letter code: 2-oxo-Delta(3)-4,5,5-trimethylcyclopentenylacetyl-CoA monooxygenase (545 aa).

FAD is bound by residues threonine 20, glutamate 39, 47–50 (TWYW), 59–60 (DT), tyrosine 65, and valine 112. Residue 57-59 (RLD) participates in NADP(+) binding. NADP(+)-binding positions include 193-199 (TGATGVQ) and 216-217 (RT). Valine 446 is an FAD binding site. Tryptophan 501 serves as a coordination point for NADP(+).

Belongs to the FAD-binding monooxygenase family. As to quaternary structure, homodimer. The cofactor is FAD.

It catalyses the reaction [(1R)-2,2,3-trimethyl-5-oxocyclopent-3-enyl]acetyl-CoA + NADPH + O2 + H(+) = [(2R)-3,3,4-trimethyl-6-oxo-3,6-dihydro-1H-pyran-2-yl]acetyl-CoA + NADP(+) + H2O. The protein operates within terpene metabolism; (R)-camphor degradation. In terms of biological role, involved in the degradation of (+)-camphor. Catalyzes the lactonization of 2-oxo-delta(3)-4,5, 5-trimethylcyclopentenylacetyl-CoA (OT-CoA), a key intermediate in the metabolism of camphor. 2-Oxocyclopentyl ethyl acetate is also a good substrate, as is 2-oxocyclohexyl ethyl acetate and methyl-substituted cyclohexanones, but free acid is a poor substrate. The polypeptide is 2-oxo-Delta(3)-4,5,5-trimethylcyclopentenylacetyl-CoA monooxygenase (otemo) (Pseudomonas putida (Arthrobacter siderocapsulatus)).